Reading from the N-terminus, the 95-residue chain is Glutaredoxin 1 (95 aa).

Residues 1–95 (MNKSILHTII…DKLLEHQPKN (95 aa)) enclose the Glutaredoxin domain. Cysteines 17 and 20 form a disulfide.

Belongs to the glutaredoxin family. Monomer.

Its subcellular location is the cytoplasm. Functionally, has a glutathione-disulfide oxidoreductase activity in the presence of NADPH and glutathione reductase. Reduces low molecular weight disulfides and proteins. This chain is Glutaredoxin 1 (grxC1), found in Rickettsia prowazekii (strain Madrid E).